We begin with the raw amino-acid sequence, 1487 residues long: Probable serine/threonine-protein kinase roco11 (1487 aa).

The segment at threonine 108–glutamine 134 is disordered. Positions histidine 116–glutamine 125 are enriched in basic residues. 3 LRR repeats span residues asparagine 295–leucine 316, histidine 318–threonine 340, and asparagine 341–glutamine 362. The region spanning lysine 379 to serine 564 is the Roc domain. The interval lysine 379–serine 564 is small GTPase-like. Residues glycine 392 to serine 399, aspartate 448 to glutamine 452, and threonine 507 to aspartate 510 each bind GTP. One can recognise a COR domain in the interval valine 678 to leucine 872. The disordered stretch occupies residues serine 891–isoleucine 1007. Residues serine 897–threonine 931 are compositionally biased toward low complexity. Residues valine 932 to threonine 950 show a composition bias toward polar residues. The segment covering asparagine 951–isoleucine 1007 has biased composition (low complexity). In terms of domain architecture, Protein kinase spans valine 1185–tyrosine 1452. Residues isoleucine 1191–valine 1199 and lysine 1216 each bind ATP. Residue aspartate 1313 is the Proton acceptor of the active site. A disordered region spans residues lysine 1464–lysine 1487.

Belongs to the protein kinase superfamily. TKL Ser/Thr protein kinase family. ROCO subfamily.

It carries out the reaction L-seryl-[protein] + ATP = O-phospho-L-seryl-[protein] + ADP + H(+). It catalyses the reaction L-threonyl-[protein] + ATP = O-phospho-L-threonyl-[protein] + ADP + H(+). The protein is Probable serine/threonine-protein kinase roco11 (roco11) of Dictyostelium discoideum (Social amoeba).